Consider the following 603-residue polypeptide: Proline--tRNA ligase (603 aa).

It belongs to the class-II aminoacyl-tRNA synthetase family. ProS type 1 subfamily. In terms of assembly, homodimer.

It localises to the cytoplasm. The enzyme catalyses tRNA(Pro) + L-proline + ATP = L-prolyl-tRNA(Pro) + AMP + diphosphate. Its function is as follows. Catalyzes the attachment of proline to tRNA(Pro) in a two-step reaction: proline is first activated by ATP to form Pro-AMP and then transferred to the acceptor end of tRNA(Pro). As ProRS can inadvertently accommodate and process non-cognate amino acids such as alanine and cysteine, to avoid such errors it has two additional distinct editing activities against alanine. One activity is designated as 'pretransfer' editing and involves the tRNA(Pro)-independent hydrolysis of activated Ala-AMP. The other activity is designated 'posttransfer' editing and involves deacylation of mischarged Ala-tRNA(Pro). The misacylated Cys-tRNA(Pro) is not edited by ProRS. The sequence is that of Proline--tRNA ligase from Synechocystis sp. (strain ATCC 27184 / PCC 6803 / Kazusa).